We begin with the raw amino-acid sequence, 94 residues long: Pyrimidine/purine nucleoside phosphorylase (94 aa).

The protein belongs to the nucleoside phosphorylase PpnP family.

The enzyme catalyses a purine D-ribonucleoside + phosphate = a purine nucleobase + alpha-D-ribose 1-phosphate. It catalyses the reaction adenosine + phosphate = alpha-D-ribose 1-phosphate + adenine. It carries out the reaction cytidine + phosphate = cytosine + alpha-D-ribose 1-phosphate. The catalysed reaction is guanosine + phosphate = alpha-D-ribose 1-phosphate + guanine. The enzyme catalyses inosine + phosphate = alpha-D-ribose 1-phosphate + hypoxanthine. It catalyses the reaction thymidine + phosphate = 2-deoxy-alpha-D-ribose 1-phosphate + thymine. It carries out the reaction uridine + phosphate = alpha-D-ribose 1-phosphate + uracil. The catalysed reaction is xanthosine + phosphate = alpha-D-ribose 1-phosphate + xanthine. Catalyzes the phosphorolysis of diverse nucleosides, yielding D-ribose 1-phosphate and the respective free bases. Can use uridine, adenosine, guanosine, cytidine, thymidine, inosine and xanthosine as substrates. Also catalyzes the reverse reactions. This is Pyrimidine/purine nucleoside phosphorylase from Pectobacterium atrosepticum (strain SCRI 1043 / ATCC BAA-672) (Erwinia carotovora subsp. atroseptica).